The sequence spans 599 residues: Elongation factor 4 (599 aa).

The region spanning 5–187 (SKIRNFSIVA…AIVKRLPAPT (183 aa)) is the tr-type G domain. GTP is bound by residues 17-22 (DHGKST) and 134-137 (NKID).

It belongs to the TRAFAC class translation factor GTPase superfamily. Classic translation factor GTPase family. LepA subfamily.

Its subcellular location is the cell inner membrane. The enzyme catalyses GTP + H2O = GDP + phosphate + H(+). Functionally, required for accurate and efficient protein synthesis under certain stress conditions. May act as a fidelity factor of the translation reaction, by catalyzing a one-codon backward translocation of tRNAs on improperly translocated ribosomes. Back-translocation proceeds from a post-translocation (POST) complex to a pre-translocation (PRE) complex, thus giving elongation factor G a second chance to translocate the tRNAs correctly. Binds to ribosomes in a GTP-dependent manner. The chain is Elongation factor 4 from Ruegeria sp. (strain TM1040) (Silicibacter sp.).